The chain runs to 256 residues: 5-keto-4-deoxy-D-glucarate aldolase (256 aa).

Histidine 50 (proton acceptor) is an active-site residue. Glutamine 151 contributes to the substrate binding site. Residue glutamate 153 participates in Mg(2+) binding. The substrate site is built by serine 178 and aspartate 179. Residue aspartate 179 participates in Mg(2+) binding.

Belongs to the HpcH/HpaI aldolase family. KDGluc aldolase subfamily. As to quaternary structure, homohexamer; trimer of dimers. Mg(2+) serves as cofactor.

The catalysed reaction is 5-dehydro-4-deoxy-D-glucarate = 2-hydroxy-3-oxopropanoate + pyruvate. The enzyme catalyses 2-dehydro-3-deoxy-D-glucarate = 2-hydroxy-3-oxopropanoate + pyruvate. The protein operates within carbohydrate acid metabolism; galactarate degradation; D-glycerate from galactarate: step 2/3. Catalyzes the reversible retro-aldol cleavage of both 5-keto-4-deoxy-D-glucarate and 2-keto-3-deoxy-D-glucarate to pyruvate and tartronic semialdehyde. The chain is 5-keto-4-deoxy-D-glucarate aldolase from Enterobacter sp. (strain 638).